A 156-amino-acid chain; its full sequence is Small ribosomal subunit protein uS7 (156 aa).

It belongs to the universal ribosomal protein uS7 family. As to quaternary structure, part of the 30S ribosomal subunit. Contacts proteins S9 and S11.

Its function is as follows. One of the primary rRNA binding proteins, it binds directly to 16S rRNA where it nucleates assembly of the head domain of the 30S subunit. Is located at the subunit interface close to the decoding center, probably blocks exit of the E-site tRNA. This Acetivibrio thermocellus (strain ATCC 27405 / DSM 1237 / JCM 9322 / NBRC 103400 / NCIMB 10682 / NRRL B-4536 / VPI 7372) (Clostridium thermocellum) protein is Small ribosomal subunit protein uS7.